The primary structure comprises 843 residues: Excretory canal abnormal protein 6 (843 aa).

Disordered stretches follow at residues 54–135, 568–601, 748–767, and 773–843; these read QLKD…EKKT, TLES…PAKT, TPLS…MTAE, and TMKP…PKWV. Composition is skewed to pro residues over residues 66 to 76 and 83 to 103; these read TPPPPPPPPPL and APPP…PPPI. An FH2 domain is found at 127–512; sequence FLPKKEKKTK…KEEKKETQTT (386 aa). Composition is skewed to polar residues over residues 776–792 and 819–830; these read PSVS…TSSH and IPQSPTVTSSAR.

It belongs to the formin homology family. In terms of tissue distribution, expressed in the excretory cell and mostly accumulates at the tip of the excretory cell canals.

Its subcellular location is the cytoplasm. It is found in the cytoskeleton. In terms of biological role, constitutively active protein required for microtubule and F-actin growth, structural maintenance and organization during excretory cell tubulogenesis. This chain is Excretory canal abnormal protein 6, found in Caenorhabditis elegans.